We begin with the raw amino-acid sequence, 271 residues long: Short-chain type dehydrogenase/reductase (271 aa).

25 to 49 (IVTGASRGIGREIALNMAEKGAKVV) is a binding site for NAD(+). Substrate is bound at residue serine 166. The Proton acceptor role is filled by tyrosine 179.

It belongs to the short-chain dehydrogenases/reductases (SDR) family.

The protein is Short-chain type dehydrogenase/reductase of Picea abies (Norway spruce).